Here is a 232-residue protein sequence, read N- to C-terminus: Protein FAM246A (232 aa).

Disordered regions lie at residues 1–47 (MATP…RAPG), 153–178 (LPPP…RGPT), and 191–232 (AASR…GGGD). A compositionally biased stretch (basic and acidic residues) spans 19-31 (EVLRRVTGRRRDP). The span at 211–220 (APVRKNHKKM) shows a compositional bias: basic residues.

Belongs to the FAM246 family.

This is Protein FAM246A from Homo sapiens (Human).